The following is a 132-amino-acid chain: uncharacterized protein (132 aa).

This is an uncharacterized protein from Acanthamoeba polyphaga (Amoeba).